Here is a 150-residue protein sequence, read N- to C-terminus: MNNKSLIFLAIKSLDIQNQISLTSNIFNLSFDIQLNQIIIDSQIKSDKDLKSILLKVLNSIGNQSLDSNDLANNYKRRFRYYFSKMSFFRSLEKSIYENNILIDNLGITGLYLLYLIVEKEDVFKLWLYYKNYTFDQLIRLIETKNNFYN.

It is found in the plastid. The protein resides in the chloroplast. This is an uncharacterized protein from Pyropia yezoensis (Susabi-nori).